The primary structure comprises 223 residues: Killer cell lectin-like receptor subfamily B member 1B allele C (223 aa).

Over 1–45 (MDTAVVYADLHLARTGEPKRESPPSLSPDTCQCPRWHRLALKLGC) the chain is Cytoplasmic. The ITIM motif signature appears at 5-10 (VVYADL). The LCK-binding motif motif lies at 31–34 (CQCP). The chain crosses the membrane as a helical; Signal-anchor for type II membrane protein span at residues 46-66 (ACFILLVLSVIGLGVLVLTLL). Residues 67–223 (QKPLLQNSPA…LKRESTCNDS (157 aa)) are Extracellular-facing. The C-type lectin domain maps to 101–211 (HRDKCFHVSQ…CDSDNIWICQ (111 aa)). 2 cysteine pairs are disulfide-bonded: C122–C210 and C189–C202.

In terms of assembly, homodimer; disulfide-linked. Interacts with tyrosine kinase LCK. Binds PTPN6/SHP-1 in a phosphorylation-dependent manner. Expressed in a subset of natural killer cells.

It is found in the membrane. Receptor for CLEC2D/OCIL. Ligand-binding contributes to inhibition of cytotoxic natural killer (NK) cells. May mediate MHC class I-independent 'missing-self' recognition of allografts, tumor cells and virus-infected cells. The protein is Killer cell lectin-like receptor subfamily B member 1B allele C of Rattus norvegicus (Rat).